Reading from the N-terminus, the 132-residue chain is Cytidine deaminase (132 aa).

A CMP/dCMP-type deaminase domain is found at 1–128 (MDRQMLIKEA…ELLPGAFTAE (128 aa)). 42–44 (NIE) contacts substrate. Cysteine 53 contributes to the Zn(2+) binding site. The active-site Proton donor is the glutamate 55. Positions 86 and 89 each coordinate Zn(2+).

The protein belongs to the cytidine and deoxycytidylate deaminase family. It depends on Zn(2+) as a cofactor.

The catalysed reaction is cytidine + H2O + H(+) = uridine + NH4(+). The enzyme catalyses 2'-deoxycytidine + H2O + H(+) = 2'-deoxyuridine + NH4(+). In terms of biological role, this enzyme scavenges exogenous and endogenous cytidine and 2'-deoxycytidine for UMP synthesis. The polypeptide is Cytidine deaminase (cdd) (Halalkalibacterium halodurans (strain ATCC BAA-125 / DSM 18197 / FERM 7344 / JCM 9153 / C-125) (Bacillus halodurans)).